The following is a 587-amino-acid chain: ATF/CREB activator 2 (587 aa).

4 disordered regions span residues 1-62 (MFTG…SRSL), 123-144 (LRQQQQQDQRQQSPSMKTEEES), 169-195 (NLSQLSSTRKSAPNDSTTAPTNASNIA), and 381-423 (TGGE…IPGT). The segment covering 16–29 (KQKDNNKRGIDDTS) has biased composition (basic and acidic residues). Low complexity-rich tracts occupy residues 39–57 (SVSDTSAAATTTSTMNNSA) and 123–134 (LRQQQQQDQRQQ). Phosphoserine occurs at positions 171 and 179. The span at 385 to 395 (NRGKSALRESH) shows a compositional bias: basic and acidic residues. Over residues 396–418 (SNPSFTPKSQGSHLNLAANTQGN) the composition is skewed to polar residues. At S399 the chain carries Phosphoserine. The bZIP domain maps to 425–488 (AWKRARLLER…SKFKKFSKIH (64 aa)). Residues 427–447 (KRARLLERNRIAASKCRQRKK) are basic motif. Residues 453-467 (LQKEFNEIKDENRIL) form a leucine-zipper region. The disordered stretch occupies residues 552–587 (SQRFGSDTDDDDIDLKPVEGGKDPDNQSLPNSEKIK). S557 carries the post-translational modification Phosphoserine. T559 bears the Phosphothreonine mark. Residues 565–576 (DLKPVEGGKDPD) show a composition bias toward basic and acidic residues. Positions 577 to 587 (NQSLPNSEKIK) are enriched in polar residues.

It belongs to the bZIP family.

It is found in the nucleus. Transcriptional activator of promoters containing ATF/CREB sites. Can independently stimulate transcription through ATF/CREB sites. Important for a variety of biological functions including growth on non-optimal carbon sources. In Saccharomyces cerevisiae (strain ATCC 204508 / S288c) (Baker's yeast), this protein is ATF/CREB activator 2 (CST6).